The following is a 306-amino-acid chain: LysM and putative peptidoglycan-binding domain-containing protein 3 (306 aa).

Topologically, residues 1 to 217 are extracellular; sequence MAGRHQNRSF…PYYGADWGIG (217 aa). N-linked (GlcNAc...) asparagine glycosylation is present at Asn7. Ser55 is subject to Phosphoserine. The LysM domain occupies 65–109; sequence LTKDIQEGDTLNAIALQYCCTVADIKRVNNLISDQDFFALRSIKI. The chain crosses the membrane as a helical span at residues 218-238; that stretch reads WWTAVVIMLIVGIITPVFYLL. The Cytoplasmic segment spans residues 239–306; the sequence is YYEILAKVDV…SQSPAAQQET (68 aa).

It localises to the cell membrane. The protein localises to the golgi apparatus. Essential for Golgi structural integrity. This chain is LysM and putative peptidoglycan-binding domain-containing protein 3 (LYSMD3), found in Homo sapiens (Human).